The sequence spans 389 residues: MLLALAQWLQNDASFLRVFSYLTFRAVMATITALLIGLVCGPAVIRKLTAMKVGQAVRKDGPQTHLVKSGTPTMGGVLILLGIAVATLLWADLTNRFIWIVMLVTFGFGVIGWVDDYRKVVYKDPRGMSSREKYFWQSVIGLFAAVYLAFSVSEASNVRVYDLFMAWVRSGLSMGLPPHADLMLPFVKSISYPLGVWGFIVLTYLVIVGASNAVNLTDGLDGLVIMPVVLVGASLGVFAYVMGSSVYSKYLLFPHIAGAGELLIFCSAMGGAGLAFLWFNTHPAQMFMGDVGALALGGALGTVAVIVRQEIVLFIMGGIFVAETLSVMLQVTWFKFTKRRFGEGRRLFKMAPLHHHFELSGWKETQVVVRFWIITLMLCLFGLSTLKLR.

10 helical membrane passes run 25 to 45, 73 to 93, 97 to 117, 135 to 155, 190 to 210, 222 to 242, 259 to 279, 287 to 307, 311 to 331, and 366 to 386; these read RAVM…PAVI, TMGG…WADL, FIWI…VDDY, FWQS…VSEA, ISYP…IVGA, GLVI…AYVM, AGEL…FLWF, FMGD…AVIV, IVLF…MLQV, and QVVV…LSTL.

Belongs to the glycosyltransferase 4 family. MraY subfamily. Requires Mg(2+) as cofactor.

It is found in the cell inner membrane. The catalysed reaction is UDP-N-acetyl-alpha-D-muramoyl-L-alanyl-gamma-D-glutamyl-meso-2,6-diaminopimeloyl-D-alanyl-D-alanine + di-trans,octa-cis-undecaprenyl phosphate = di-trans,octa-cis-undecaprenyl diphospho-N-acetyl-alpha-D-muramoyl-L-alanyl-D-glutamyl-meso-2,6-diaminopimeloyl-D-alanyl-D-alanine + UMP. It functions in the pathway cell wall biogenesis; peptidoglycan biosynthesis. Its function is as follows. Catalyzes the initial step of the lipid cycle reactions in the biosynthesis of the cell wall peptidoglycan: transfers peptidoglycan precursor phospho-MurNAc-pentapeptide from UDP-MurNAc-pentapeptide onto the lipid carrier undecaprenyl phosphate, yielding undecaprenyl-pyrophosphoryl-MurNAc-pentapeptide, known as lipid I. This Paraburkholderia xenovorans (strain LB400) protein is Phospho-N-acetylmuramoyl-pentapeptide-transferase.